The sequence spans 100 residues: MTAQHQSDTLLHRLNTLPPKRYGVFLLNDDYTTMEFVVEILTEIFMLGQEQAVAVMLLVHHEGKGLCGTYTRDIAQTKQQQVMQRAKAEGHPLQCIVEEI.

It belongs to the ClpS family. In terms of assembly, binds to the N-terminal domain of the chaperone ClpA.

In terms of biological role, involved in the modulation of the specificity of the ClpAP-mediated ATP-dependent protein degradation. The chain is ATP-dependent Clp protease adapter protein ClpS from Neisseria meningitidis serogroup B (strain ATCC BAA-335 / MC58).